Reading from the N-terminus, the 401-residue chain is Probable tRNA sulfurtransferase (401 aa).

One can recognise a THUMP domain in the interval 63–168 (TTAEQALSYL…EREAFLYGAR (106 aa)). Residues 186–187 (LL), 211–212 (YF), R268, G290, and Q299 each bind ATP.

This sequence belongs to the ThiI family.

It is found in the cytoplasm. The catalysed reaction is [ThiI sulfur-carrier protein]-S-sulfanyl-L-cysteine + a uridine in tRNA + 2 reduced [2Fe-2S]-[ferredoxin] + ATP + H(+) = [ThiI sulfur-carrier protein]-L-cysteine + a 4-thiouridine in tRNA + 2 oxidized [2Fe-2S]-[ferredoxin] + AMP + diphosphate. It carries out the reaction [ThiS sulfur-carrier protein]-C-terminal Gly-Gly-AMP + S-sulfanyl-L-cysteinyl-[cysteine desulfurase] + AH2 = [ThiS sulfur-carrier protein]-C-terminal-Gly-aminoethanethioate + L-cysteinyl-[cysteine desulfurase] + A + AMP + 2 H(+). It functions in the pathway cofactor biosynthesis; thiamine diphosphate biosynthesis. In terms of biological role, catalyzes the ATP-dependent transfer of a sulfur to tRNA to produce 4-thiouridine in position 8 of tRNAs, which functions as a near-UV photosensor. Also catalyzes the transfer of sulfur to the sulfur carrier protein ThiS, forming ThiS-thiocarboxylate. This is a step in the synthesis of thiazole, in the thiamine biosynthesis pathway. The sulfur is donated as persulfide by IscS. In Treponema pallidum (strain Nichols), this protein is Probable tRNA sulfurtransferase.